Here is a 304-residue protein sequence, read N- to C-terminus: Tetrahydromethanopterin S-methyltransferase subunit E (304 aa).

Helical transmembrane passes span 3–23 (PLIG…AGAS), 86–106 (PLFA…TFAV), 131–151 (HTPV…VVSY), 152–172 (LMTV…IWGI), 233–253 (PVTG…TTVF), and 263–283 (WISV…NWKI).

It belongs to the MtrE family. As to quaternary structure, the complex is composed of 8 subunits; MtrA, MtrB, MtrC, MtrD, MtrE, MtrF, MtrG and MtrH.

The protein localises to the cell membrane. The catalysed reaction is 5-methyl-5,6,7,8-tetrahydromethanopterin + coenzyme M + 2 Na(+)(in) = 5,6,7,8-tetrahydromethanopterin + methyl-coenzyme M + 2 Na(+)(out). Its pathway is one-carbon metabolism; methanogenesis from CO(2); methyl-coenzyme M from 5,10-methylene-5,6,7,8-tetrahydromethanopterin: step 2/2. In terms of biological role, part of a complex that catalyzes the formation of methyl-coenzyme M and tetrahydromethanopterin from coenzyme M and methyl-tetrahydromethanopterin. This is an energy-conserving, sodium-ion translocating step. This is Tetrahydromethanopterin S-methyltransferase subunit E from Methanosarcina acetivorans (strain ATCC 35395 / DSM 2834 / JCM 12185 / C2A).